We begin with the raw amino-acid sequence, 563 residues long: Arginine--tRNA ligase (563 aa).

Positions 121-131 match the 'HIGH' region motif; the sequence is PNIAKPFSIGH.

This sequence belongs to the class-I aminoacyl-tRNA synthetase family. As to quaternary structure, monomer.

Its subcellular location is the cytoplasm. The catalysed reaction is tRNA(Arg) + L-arginine + ATP = L-arginyl-tRNA(Arg) + AMP + diphosphate. This is Arginine--tRNA ligase from Streptococcus thermophilus (strain CNRZ 1066).